A 77-amino-acid chain; its full sequence is Membrane-associated ATPase epsilon chain (77 aa).

To E.hirae NtpH. In terms of assembly, sul-ATPase is composed of six (or maybe five) subunits: alpha, beta, delta, gamma, C (proteolipid), and possibly epsilon.

It catalyses the reaction ATP + H2O + 4 H(+)(in) = ADP + phosphate + 5 H(+)(out). The polypeptide is Membrane-associated ATPase epsilon chain (atpE) (Sulfolobus acidocaldarius (strain ATCC 33909 / DSM 639 / JCM 8929 / NBRC 15157 / NCIMB 11770)).